We begin with the raw amino-acid sequence, 197 residues long: Fucoxanthin-chlorophyll a-c binding protein F, chloroplastic (197 aa).

The transit peptide at 1-31 (MKFAVFASLLASAAAFAPAQQSARTSVATNM) directs the protein to the chloroplast. A run of 3 helical transmembrane segments spans residues 73–94 (ISML…PGDI), 114–134 (ISTA…IAVM), and 174–196 (GRAA…SLIP).

This sequence belongs to the fucoxanthin chlorophyll protein family. The LHC complex of chromophytic algae is composed of fucoxanthin, chlorophyll A and C bound non-covalently by fucoxanthin chlorophyll proteins (FCPs). The ratio of the pigments in lhc; fucoxanthin: chlorophyll C: chlorophyll A is (0.6-1): (0.1-0.3): (1).

The protein localises to the plastid. Its subcellular location is the chloroplast thylakoid membrane. Its function is as follows. The light-harvesting complex (LHC) functions as a light receptor, it captures and delivers excitation energy to photosystems with which it is closely associated. In chromophytic algae, LHC is associated with photosystem II, energy being transferred from fucoxanthin and chlorophyll C to chlorophyll A and the photosynthetic reaction centers where it is used to synthesize ATP and reducing power. This Phaeodactylum tricornutum (Diatom) protein is Fucoxanthin-chlorophyll a-c binding protein F, chloroplastic (FCPF).